The sequence spans 252 residues: Putative phosphonates utilization ATP-binding protein PhnK (252 aa).

Residues 6–246 (LSVNNLTHLY…PHHPYTQLLV (241 aa)) enclose the ABC transporter domain. Residue 38–45 (GESGSGKT) participates in ATP binding.

Belongs to the ABC transporter superfamily. In terms of assembly, forms a complex with PhnG, PhnH, PhnI and PhnJ with the suggested composition PhnG(4)H(2)I(2)J(2)K.

Its function is as follows. Belongs to an operon involved in alkylphosphonate uptake and C-P lyase. Exact function not known. PhnK is not required for the ribophosphonate triphosphate (RPnTP) synthase reaction. This Escherichia coli (strain K12) protein is Putative phosphonates utilization ATP-binding protein PhnK (phnK).